Reading from the N-terminus, the 225-residue chain is Recoverin family protein DDB_G0274781 (225 aa).

A compositionally biased stretch (low complexity) spans 1 to 13 (MGNKQGKSPNNSK). Residues 1-20 (MGNKQGKSPNNSKGGKKYKI) are disordered. A lipid anchor (N-myristoyl glycine) is attached at G2. 3 EF-hand domains span residues 78–113 (DNSPFGDRLFDLLDTNKDNTVDLQEFISGLSILCKG), 114–149 (TAEEKLELSFKAYDIDGNGYITKSELSQMFQQAWIS), and 174–209 (MAQIFADGAFSSLDVNGDGKLSFNEFKQFAMSHPKI). Residues D91, N93, D95, T97, E102, D127, D129, N131, Y133, E138, D187, N189, D191, K193, and E198 each contribute to the Ca(2+) site.

It belongs to the recoverin family.

This chain is Recoverin family protein DDB_G0274781, found in Dictyostelium discoideum (Social amoeba).